A 366-amino-acid chain; its full sequence is Phospho-N-acetylmuramoyl-pentapeptide-transferase (366 aa).

10 helical membrane passes run 27–47 (AALFTSALIVFLFGPTIINSL), 71–91 (TPTMGGLMILAGIVGASLLWA), 93–113 (LSNVYVVATLLVTLGFGAIGF), 134–154 (LGIEFIIAGIAVYFMMRTALA), 174–194 (FLINLGIMFVVFGGFVIVGAG), 205–225 (GLAIVPVMIAAASFGVIAYLA), 245–265 (LAVVLGAVIGAGLGFLWFNAP), 268–288 (AIFMGDTGSLALGGTIGTVAV), 294–314 (IVMAIIGGLFVMETLSVIIQV), and 343–363 (QVVIRFWIIAVGLALLGLSTL).

Belongs to the glycosyltransferase 4 family. MraY subfamily. Requires Mg(2+) as cofactor.

It is found in the cell inner membrane. The enzyme catalyses UDP-N-acetyl-alpha-D-muramoyl-L-alanyl-gamma-D-glutamyl-meso-2,6-diaminopimeloyl-D-alanyl-D-alanine + di-trans,octa-cis-undecaprenyl phosphate = di-trans,octa-cis-undecaprenyl diphospho-N-acetyl-alpha-D-muramoyl-L-alanyl-D-glutamyl-meso-2,6-diaminopimeloyl-D-alanyl-D-alanine + UMP. It participates in cell wall biogenesis; peptidoglycan biosynthesis. Its function is as follows. Catalyzes the initial step of the lipid cycle reactions in the biosynthesis of the cell wall peptidoglycan: transfers peptidoglycan precursor phospho-MurNAc-pentapeptide from UDP-MurNAc-pentapeptide onto the lipid carrier undecaprenyl phosphate, yielding undecaprenyl-pyrophosphoryl-MurNAc-pentapeptide, known as lipid I. This chain is Phospho-N-acetylmuramoyl-pentapeptide-transferase, found in Rhizobium etli (strain CIAT 652).